A 512-amino-acid polypeptide reads, in one-letter code: FAD-linked oxidoreductase iacH (512 aa).

The signal sequence occupies residues 1-22 (MVSLKACVVAYGFTLLPALVSG). Residues asparagine 39, asparagine 55, asparagine 69, asparagine 210, asparagine 217, asparagine 278, asparagine 295, and asparagine 367 are each glycosylated (N-linked (GlcNAc...) asparagine). An FAD-binding PCMH-type domain is found at 77-248 (LDTPDVQLVV…TSLEKKIYPG (172 aa)).

Belongs to the oxygen-dependent FAD-linked oxidoreductase family. It depends on FAD as a cofactor.

Its pathway is secondary metabolite biosynthesis. In terms of biological role, FAD-linked oxidoreductase; part of the gene cluster that mediates the biosynthesis of iso-A82775C, a enylepoxycyclohexane and biosynthetic precursor of the chloropestolide anticancer natural products. Within the cluster, the prenyltransferase iacE prenylates siccayne to generate pestalodiol E, using dimethylallyl diphosphate (DMAPP) as cosubstrate. The probable oxidoreductase iacF is then involved in the epoxidation of pestalodiol F to pestalodiol F, which is further converted to pestalofone A by the short-chain dehydrogenase/reductase iacG. Iso-A82775C is subsequently generated from pestalofone A by the short-chain dehydrogenase/reductase iacC. Iso-A82775C is further condensed with maldoxin via a Diels-Alder reaction to produce the anticancer natural products chloropestolides A to E. This chain is FAD-linked oxidoreductase iacH, found in Pestalotiopsis fici (strain W106-1 / CGMCC3.15140).